We begin with the raw amino-acid sequence, 282 residues long: 2-dehydro-3-deoxyphosphooctonate aldolase (282 aa).

Belongs to the KdsA family.

The protein resides in the cytoplasm. The enzyme catalyses D-arabinose 5-phosphate + phosphoenolpyruvate + H2O = 3-deoxy-alpha-D-manno-2-octulosonate-8-phosphate + phosphate. It functions in the pathway carbohydrate biosynthesis; 3-deoxy-D-manno-octulosonate biosynthesis; 3-deoxy-D-manno-octulosonate from D-ribulose 5-phosphate: step 2/3. Its pathway is bacterial outer membrane biogenesis; lipopolysaccharide biosynthesis. This Shewanella woodyi (strain ATCC 51908 / MS32) protein is 2-dehydro-3-deoxyphosphooctonate aldolase.